Here is a 621-residue protein sequence, read N- to C-terminus: E3 SUMO-protein ligase PIAS2 (621 aa).

In terms of domain architecture, SAP spans 11–45 (VSSFRVSELQVLLGFAGRNKSGRKHDLLMRALHLL). Residues 19 to 23 (LQVLL) carry the LXXLL motif motif. Glycyl lysine isopeptide (Lys-Gly) (interchain with G-Cter in SUMO2) cross-links involve residues lysine 46 and lysine 249. Positions 134 to 299 (QPSPPIPPVH…SMSVYLVRQL (166 aa)) constitute a PINIT domain. An SP-RING-type zinc finger spans residues 331–412 (PDSEIATTSL…FMEILNDCSD (82 aa)). Zn(2+) is bound by residues cysteine 362, histidine 364, cysteine 385, and cysteine 388. Glycyl lysine isopeptide (Lys-Gly) (interchain with G-Cter in SUMO2) cross-links involve residues lysine 430, lysine 435, lysine 443, and lysine 452. The interval 467–473 (VDVIDLT) is SUMO1-binding. A phosphoserine mark is found at serine 476, serine 477, and serine 478. Positions 484-492 (PPAKRKCIF) match the Nuclear localization signal motif. A Glycyl lysine isopeptide (Lys-Gly) (interchain with G-Cter in SUMO2) cross-link involves residue lysine 489. Position 499 is a phosphoserine (serine 499). Residues lysine 502 and glutamine 562 each participate in a glycyl lysine isopeptide (Lys-Gly) (interchain with G-Cter in SUMO2) cross-link. Residues 579–610 (SSTSVTTTSSHESSTHVSSSSSRSETGVITSS) show a composition bias toward low complexity. The tract at residues 579–621 (SSTSVTTTSSHESSTHVSSSSSRSETGVITSSGSNIPDIISLD) is disordered.

This sequence belongs to the PIAS family. In terms of assembly, binds SUMO1 and UBE2I. Interacts with AXIN1, JUN, MDM2, PARK7, TP53 and TP73 isoform alpha, but not TP73 isoform beta. Interacts with STAT4 following IL12 and IFN-alpha stimulation of T-cells. Interacts also with GTF2I, GTF2IRD1, IKFZ1, DAB2 and MSX2, as well as with several steroid receptors, including ESR1, ESR2, NR3C1, PGR, AR, and with NCOA2. Sumoylation of a target protein seems to enhance the interaction. Binds to sumoylated ELK1. Binds DNA, such as CDKN1A promoter, in a sequence-specific manner. Interacts with PLAG1. Interacts with KLF8; the interaction results in SUMO ligation and repression of KLF8 transcriptional activity and of its cell cycle progression into G(1) phase. PIAS2-beta interacts with IFIH1/MDA5. Isoform PIAS2-alpha interacts with PML (isoform PML-12). Interacts with PRDM1/Blimp-1. In terms of processing, sumoylated. As to expression, mainly expressed in testis. Isoform 3 is expressed predominantly in adult testis, weakly in pancreas, embryonic testis and sperm, and at very low levels in other organs.

It is found in the nucleus speckle. The protein localises to the nucleus. The protein resides in the PML body. The protein operates within protein modification; protein sumoylation. Functions as an E3-type small ubiquitin-like modifier (SUMO) ligase, stabilizing the interaction between UBE2I and the substrate, and as a SUMO-tethering factor. Plays a crucial role as a transcriptional coregulator in various cellular pathways, including the STAT pathway, the p53 pathway and the steroid hormone signaling pathway. The effects of this transcriptional coregulation, transactivation or silencing may vary depending upon the biological context and the PIAS2 isoform studied. However, it seems to be mostly involved in gene silencing. Binds to sumoylated ELK1 and enhances its transcriptional activity by preventing recruitment of HDAC2 by ELK1, thus reversing SUMO-mediated repression of ELK1 transactivation activity. Isoform PIAS2-beta, but not isoform PIAS2-alpha, promotes MDM2 sumoylation. Isoform PIAS2-alpha promotes PARK7 sumoylation. Isoform PIAS2-beta promotes NCOA2 sumoylation more efficiently than isoform PIAS2-alpha. Isoform PIAS2-alpha sumoylates PML at'Lys-65' and 'Lys-160'. This is E3 SUMO-protein ligase PIAS2 (PIAS2) from Homo sapiens (Human).